The following is a 128-amino-acid chain: Ribonuclease pancreatic B (128 aa).

The interval 1-21 (AESSAMKFQRQHMDPEGSPSN) is disordered. Substrate-binding residues include lysine 7 and arginine 10. Catalysis depends on histidine 12, which acts as the Proton acceptor. 2 N-linked (GlcNAc...) asparagine glycosylation sites follow: asparagine 21 and asparagine 34. 4 disulfide bridges follow: cysteine 26-cysteine 84, cysteine 40-cysteine 95, cysteine 58-cysteine 110, and cysteine 65-cysteine 72. Residues 41–45 (KPVNT), lysine 66, and arginine 85 each bind substrate. Catalysis depends on histidine 119, which acts as the Proton donor.

It belongs to the pancreatic ribonuclease family. As to expression, pancreas.

It localises to the secreted. It catalyses the reaction an [RNA] containing cytidine + H2O = an [RNA]-3'-cytidine-3'-phosphate + a 5'-hydroxy-ribonucleotide-3'-[RNA].. The enzyme catalyses an [RNA] containing uridine + H2O = an [RNA]-3'-uridine-3'-phosphate + a 5'-hydroxy-ribonucleotide-3'-[RNA].. The polypeptide is Ribonuclease pancreatic B (Cavia porcellus (Guinea pig)).